We begin with the raw amino-acid sequence, 360 residues long: E3 ubiquitin-protein ligase HAKAI homolog (360 aa).

Over residues 1–11 the composition is skewed to basic and acidic residues; it reads MLQIRLRRDSP. Positions 1–24 are disordered; that stretch reads MLQIRLRRDSPTETGNGARPSPTE. An RING-type zinc finger spans residues 72 to 107; that stretch reads CVRCDFPIAIYGRLIPCDHAFCLECARSDSICYLCD. The C2H2-type zinc finger occupies 123 to 148; the sequence is FICAAPHCLRSFLKKLDFEAHVHDLH. A disordered region spans residues 156-360; that stretch reads AEKEDGNQSD…QENRDGFGQE (205 aa). 3 stretches are compositionally biased toward polar residues: residues 163 to 179, 186 to 214, and 270 to 283; these read QSDV…SEST, SQLQ…QNYP, and YPTT…QFFN. The segment covering 293 to 304 has biased composition (low complexity); the sequence is ESGGSEQSSLLG.

It belongs to the Hakai family. In terms of assembly, interacts with MTB and VIR. Associates with MTA, MTB, FIP37 and VIR to form the m6A writer complex which is essential for adenosine methylation at specific mRNA sequences.

The protein localises to the nucleus speckle. It localises to the nucleus. The protein resides in the nucleoplasm. It carries out the reaction S-ubiquitinyl-[E2 ubiquitin-conjugating enzyme]-L-cysteine + [acceptor protein]-L-lysine = [E2 ubiquitin-conjugating enzyme]-L-cysteine + N(6)-ubiquitinyl-[acceptor protein]-L-lysine.. Functionally, probable E3 ubiquitin-protein ligase which is a subunit of the N6-methyltransferase complex, a multiprotein complex that mediates N6-methyladenosine (m6A) methylation at the 5'-[AG]GAC-3' consensus sites of some mRNAs. Associates with MTA, MTB, FIP37 and VIR to form the m6A writer complex which is essential for adenosine methylation at specific mRNA sequences. N6-methyladenosine (m6A) plays a role in mRNA stability, processing, translation efficiency and editing. The sequence is that of E3 ubiquitin-protein ligase HAKAI homolog from Arabidopsis thaliana (Mouse-ear cress).